Here is a 161-residue protein sequence, read N- to C-terminus: Regulator of ribonuclease activity A (161 aa).

This sequence belongs to the RraA family. Homotrimer. Binds to both RNA-binding sites in the C-terminal region of Rne and to RhlB.

It is found in the cytoplasm. In terms of biological role, globally modulates RNA abundance by binding to RNase E (Rne) and regulating its endonucleolytic activity. Can modulate Rne action in a substrate-dependent manner by altering the composition of the degradosome. Modulates RNA-binding and helicase activities of the degradosome. In Serratia proteamaculans (strain 568), this protein is Regulator of ribonuclease activity A.